We begin with the raw amino-acid sequence, 745 residues long: Fatty acid oxidation complex subunit alpha (745 aa).

The enoyl-CoA hydratase stretch occupies residues 47 to 209 (VNTLKAKFAE…KMGLVDDVVP (163 aa)). Positions 325–745 (RAIHRVGVLG…LDEAAITAHN (421 aa)) are 3-hydroxyacyl-CoA dehydrogenase.

The protein in the N-terminal section; belongs to the enoyl-CoA hydratase/isomerase family. In the central section; belongs to the 3-hydroxyacyl-CoA dehydrogenase family. Heterotetramer of two alpha chains (FadJ) and two beta chains (FadI).

Its subcellular location is the cytoplasm. It catalyses the reaction a (3S)-3-hydroxyacyl-CoA = a (2E)-enoyl-CoA + H2O. It carries out the reaction a 4-saturated-(3S)-3-hydroxyacyl-CoA = a (3E)-enoyl-CoA + H2O. The enzyme catalyses a (3S)-3-hydroxyacyl-CoA + NAD(+) = a 3-oxoacyl-CoA + NADH + H(+). The catalysed reaction is (3S)-3-hydroxybutanoyl-CoA = (3R)-3-hydroxybutanoyl-CoA. It participates in lipid metabolism; fatty acid beta-oxidation. Catalyzes the formation of a hydroxyacyl-CoA by addition of water on enoyl-CoA. Also exhibits 3-hydroxyacyl-CoA epimerase and 3-hydroxyacyl-CoA dehydrogenase activities. The polypeptide is Fatty acid oxidation complex subunit alpha (Yersinia enterocolitica serotype O:8 / biotype 1B (strain NCTC 13174 / 8081)).